A 219-amino-acid chain; its full sequence is 3,4-dihydroxy-2-butanone 4-phosphate synthase (219 aa).

D-ribulose 5-phosphate-binding positions include R28–E29, D33, R140–T144, and E164. A Mg(2+)-binding site is contributed by E29. H143 serves as a coordination point for Mg(2+).

It belongs to the DHBP synthase family. As to quaternary structure, homodimer. It depends on Mg(2+) as a cofactor. Requires Mn(2+) as cofactor.

It carries out the reaction D-ribulose 5-phosphate = (2S)-2-hydroxy-3-oxobutyl phosphate + formate + H(+). It participates in cofactor biosynthesis; riboflavin biosynthesis; 2-hydroxy-3-oxobutyl phosphate from D-ribulose 5-phosphate: step 1/1. In terms of biological role, catalyzes the conversion of D-ribulose 5-phosphate to formate and 3,4-dihydroxy-2-butanone 4-phosphate. The chain is 3,4-dihydroxy-2-butanone 4-phosphate synthase from Methanocorpusculum labreanum (strain ATCC 43576 / DSM 4855 / Z).